A 282-amino-acid chain; its full sequence is Putative phosphoesterase 244L (282 aa).

A divalent metal cation contacts are provided by D45, N80, and H203.

It belongs to the metallophosphoesterase superfamily. IIV-6 244L family.

The chain is Putative phosphoesterase 244L from Invertebrate iridescent virus 6 (IIV-6).